The following is a 791-amino-acid chain: IQ motif and ubiquitin-like domain-containing protein (791 aa).

The segment at 1 to 73 (MSNQQEKYEA…SDQSFSSLEP (73 aa)) is disordered. Residues 131-207 (ATVKVVLIPV…VQVEIFSTNP (77 aa)) enclose the Ubiquitin-like domain. Residues 338–367 (RLKAVIVIQTYYRQWHAKIFVENLRRQKSL) form the IQ domain.

As to quaternary structure, component of the axonemal radial spoke 1 (RS1) complex, at least composed of spoke head proteins RSPH1, RSPH3, RSPH9 and the cilia-specific component RSPH4A or sperm-specific component RSPH6A, spoke stalk proteins RSPH14, DNAJB13, DYDC1, ROPN1L and NME5, and the anchor protein IQUB. Does not appear to be part of radial spoke complexes 2 or 3 (RS2 or RS3). Interacts with CALM1. Interacts with DNAJB13. Interacts with DYNLL2. Interacts with NME5. Interacts with RSPH3. Interacts with RSPH9. Interacts with ZMYND10. Interacts with calmodulin; the interaction occurs in conditions of low but not high calcium.

The protein localises to the cytoplasm. Its subcellular location is the cytoskeleton. It is found in the flagellum axoneme. The protein resides in the cell projection. It localises to the cilium. Functionally, adapter protein that anchors the radial spoke 1 (RS1) complex to the A microtubule of outer doublet microtubules in axonemes. The triple radial spokes (RS1, RS2 and RS3) are required to modulate beating of the sperm flagellum. May play a role in inhibiting signaling via MAPK1/ERK2 and MAPK3/ERK1. Additionally, may play a role in the functioning of cilia. Not required for the functioning of tracheal or ependymal cilia. The sequence is that of IQ motif and ubiquitin-like domain-containing protein (IQUB) from Homo sapiens (Human).